Consider the following 90-residue polypeptide: Progonadoliberin-1 (90 aa).

An N-terminal signal peptide occupies residues 1–21 (MILKLMAGILLLTVCLEGCSS). Gln-22 is modified (pyrrolidone carboxylic acid). Residue Gly-31 is modified to Glycine amide.

Belongs to the GnRH family. In terms of processing, the precursor is cleaved by ACE, which removes the Gly-Lys-Arg peptide at the C-terminus, leading to mature hormone. The mature form of Gonadoliberin-1 is also cleaved and degraded by ACE.

It localises to the secreted. Its function is as follows. Stimulates the secretion of gonadotropins; it stimulates the secretion of both luteinizing and follicle-stimulating hormones. This Mus musculus (Mouse) protein is Progonadoliberin-1 (Gnrh1).